Here is a 363-residue protein sequence, read N- to C-terminus: Flagellar P-ring protein 2 (363 aa).

A signal peptide spans 1–18 (MLIRLLLLVICLAGPGVA).

This sequence belongs to the FlgI family. As to quaternary structure, the basal body constitutes a major portion of the flagellar organelle and consists of four rings (L,P,S, and M) mounted on a central rod.

Its subcellular location is the periplasm. It localises to the bacterial flagellum basal body. Functionally, assembles around the rod to form the L-ring and probably protects the motor/basal body from shearing forces during rotation. This is Flagellar P-ring protein 2 from Cereibacter sphaeroides (strain ATCC 17023 / DSM 158 / JCM 6121 / CCUG 31486 / LMG 2827 / NBRC 12203 / NCIMB 8253 / ATH 2.4.1.) (Rhodobacter sphaeroides).